The primary structure comprises 716 residues: Fatty acid oxidation complex subunit alpha (716 aa).

Residues Met1–Ala189 are enoyl-CoA hydratase/isomerase. Substrate is bound at residue Asp296. The interval Lys311 to Ala716 is 3-hydroxyacyl-CoA dehydrogenase. NAD(+) contacts are provided by residues Met324, Asp343, Val400–Glu402, Lys407, and Ser429. The For 3-hydroxyacyl-CoA dehydrogenase activity role is filled by His450. Residue Asn453 participates in NAD(+) binding. The substrate site is built by Asn500 and Tyr660.

The protein in the N-terminal section; belongs to the enoyl-CoA hydratase/isomerase family. This sequence in the C-terminal section; belongs to the 3-hydroxyacyl-CoA dehydrogenase family. As to quaternary structure, heterotetramer of two alpha chains (FadB) and two beta chains (FadA).

The enzyme catalyses a (3S)-3-hydroxyacyl-CoA + NAD(+) = a 3-oxoacyl-CoA + NADH + H(+). It catalyses the reaction a (3S)-3-hydroxyacyl-CoA = a (2E)-enoyl-CoA + H2O. The catalysed reaction is a 4-saturated-(3S)-3-hydroxyacyl-CoA = a (3E)-enoyl-CoA + H2O. It carries out the reaction (3S)-3-hydroxybutanoyl-CoA = (3R)-3-hydroxybutanoyl-CoA. The enzyme catalyses a (3Z)-enoyl-CoA = a 4-saturated (2E)-enoyl-CoA. It catalyses the reaction a (3E)-enoyl-CoA = a 4-saturated (2E)-enoyl-CoA. It participates in lipid metabolism; fatty acid beta-oxidation. Its function is as follows. Involved in the aerobic and anaerobic degradation of long-chain fatty acids via beta-oxidation cycle. Catalyzes the formation of 3-oxoacyl-CoA from enoyl-CoA via L-3-hydroxyacyl-CoA. It can also use D-3-hydroxyacyl-CoA and cis-3-enoyl-CoA as substrate. The sequence is that of Fatty acid oxidation complex subunit alpha from Shewanella baltica (strain OS155 / ATCC BAA-1091).